The chain runs to 283 residues: Protein-S-isoprenylcysteine O-methyltransferase (283 aa).

At 1 to 15 the chain is on the cytoplasmic side; the sequence is MAAARRGSAGSEARL. The chain crosses the membrane as a helical span at residues 16 to 32; the sequence is SLATFLLGASVLALPLL. At 33–40 the chain is on the lumenal side; sequence TRAGLQGR. Residues 41–58 form a helical membrane-spanning segment; that stretch reads TGLALYVAGLNALLLLLY. Topologically, residues 59 to 68 are cytoplasmic; the sequence is RPPRYQIAIR. The chain crosses the membrane as a helical span at residues 69–86; sequence ACFLGFVFGCGVLLSFSQ. The Lumenal portion of the chain corresponds to 87 to 91; it reads SSWNH. A helical membrane pass occupies residues 92 to 111; it reads FGWYVCSLSLFHYSEYLVTA. Residues 112–130 lie on the Cytoplasmic side of the membrane; that stretch reads VNNPKSLSLDSFLLNHSLE. The helical transmembrane segment at 131–148 threads the bilayer; that stretch reads YTVAALSSWIEFTLENIF. The Lumenal segment spans residues 149 to 153; that stretch reads WPELK. Residues 154 to 173 traverse the membrane as a helical segment; the sequence is QITWLSATGLLMVVFGECLR. Residues 174–211 lie on the Cytoplasmic side of the membrane; the sequence is KAAMFTAGSNFNHVVQSEKSDTHTLVTSGVYAWCRHPS. S-adenosyl-L-methionine is bound by residues Gln189, 196–199, Tyr204, and 209–212; these read HTLV and HPSY. A helical membrane pass occupies residues 212 to 227; that stretch reads YVGWFYWSIGTQVMLC. Residue Asn228 is a topological domain, lumenal. Residues 229–243 form a helical membrane-spanning segment; that stretch reads PICGVVYALTVWRFF. The Cytoplasmic segment spans residues 244–283; that stretch reads RDRTEEEEISLIHFFGEEYLDYKKRVPTGLPFIKGVKVEL. Arg246 serves as a coordination point for substrate. Glu250 contributes to the S-adenosyl-L-methionine binding site.

The protein belongs to the class VI-like SAM-binding methyltransferase superfamily. Isoprenylcysteine carboxyl methyltransferase family. In terms of tissue distribution, highly enriched in adult cerebellum, with a low level expression in other brain regions.

It localises to the endoplasmic reticulum membrane. The catalysed reaction is [protein]-C-terminal S-[(2E,6E)-farnesyl]-L-cysteine + S-adenosyl-L-methionine = [protein]-C-terminal S-[(2E,6E)-farnesyl]-L-cysteine methyl ester + S-adenosyl-L-homocysteine. Its function is as follows. Catalyzes the post-translational methylation of isoprenylated C-terminal cysteine residues. The chain is Protein-S-isoprenylcysteine O-methyltransferase (Icmt) from Mus musculus (Mouse).